The following is a 93-amino-acid chain: UPF0058 protein AF_0738 (93 aa).

It belongs to the UPF0058 family.

This chain is UPF0058 protein AF_0738, found in Archaeoglobus fulgidus (strain ATCC 49558 / DSM 4304 / JCM 9628 / NBRC 100126 / VC-16).